We begin with the raw amino-acid sequence, 630 residues long: DNA topoisomerase 4 subunit B (630 aa).

Residues tyrosine 5, asparagine 42, aspartate 69, 110 to 116 (GLHGVGI), and lysine 334 each bind ATP. Residues 412–525 (TELFLVEGDS…HGHVYVALPP (114 aa)) enclose the Toprim domain. Glutamate 418, aspartate 490, and aspartate 492 together coordinate Mg(2+).

This sequence belongs to the type II topoisomerase family. ParE type 1 subfamily. As to quaternary structure, heterotetramer composed of ParC and ParE. The cofactor is Mg(2+). Mn(2+) is required as a cofactor. Requires Ca(2+) as cofactor.

The catalysed reaction is ATP-dependent breakage, passage and rejoining of double-stranded DNA.. With respect to regulation, pyrrolopyrimidines inhibit both GyrB and its paralog in topoisomerase IV (parE). In terms of biological role, topoisomerase IV is essential for chromosome segregation; it is the principal protein responsible for decatenating newly replicated chromosomes. It relaxes supercoiled DNA. MukB stimulates the relaxation activity of topoisomerase IV and also has a modest effect on decatenation. The chain is DNA topoisomerase 4 subunit B from Escherichia coli (strain K12).